Here is a 252-residue protein sequence, read N- to C-terminus: GTP cyclohydrolase 1 type 2 homolog (252 aa).

Residues histidine 65, histidine 66, aspartate 103, histidine 220, and glutamate 224 each contribute to the a divalent metal cation site.

Belongs to the GTP cyclohydrolase I type 2/NIF3 family. Homohexamer.

The chain is GTP cyclohydrolase 1 type 2 homolog from Pseudomonas aeruginosa (strain ATCC 15692 / DSM 22644 / CIP 104116 / JCM 14847 / LMG 12228 / 1C / PRS 101 / PAO1).